A 364-amino-acid chain; its full sequence is Anhydro-N-acetylmuramic acid kinase (364 aa).

11-18 lines the ATP pocket; the sequence is GSSLDGID.

The protein belongs to the anhydro-N-acetylmuramic acid kinase family.

The catalysed reaction is 1,6-anhydro-N-acetyl-beta-muramate + ATP + H2O = N-acetyl-D-muramate 6-phosphate + ADP + H(+). It participates in amino-sugar metabolism; 1,6-anhydro-N-acetylmuramate degradation. Its pathway is cell wall biogenesis; peptidoglycan recycling. Its function is as follows. Catalyzes the specific phosphorylation of 1,6-anhydro-N-acetylmuramic acid (anhMurNAc) with the simultaneous cleavage of the 1,6-anhydro ring, generating MurNAc-6-P. Is required for the utilization of anhMurNAc either imported from the medium or derived from its own cell wall murein, and thus plays a role in cell wall recycling. In Pseudomonas syringae pv. syringae (strain B728a), this protein is Anhydro-N-acetylmuramic acid kinase.